A 174-amino-acid chain; its full sequence is NADH-quinone oxidoreductase subunit I (174 aa).

4Fe-4S ferredoxin-type domains lie at 61-91 (LTVK…ITAA) and 103-132 (ISYE…LGPE). [4Fe-4S] cluster is bound by residues cysteine 71, cysteine 74, cysteine 77, cysteine 81, cysteine 112, cysteine 115, cysteine 118, and cysteine 122.

This sequence belongs to the complex I 23 kDa subunit family. As to quaternary structure, NDH-1 is composed of 14 different subunits. Subunits NuoA, H, J, K, L, M, N constitute the membrane sector of the complex. The cofactor is [4Fe-4S] cluster.

The protein localises to the cell inner membrane. It carries out the reaction a quinone + NADH + 5 H(+)(in) = a quinol + NAD(+) + 4 H(+)(out). Its function is as follows. NDH-1 shuttles electrons from NADH, via FMN and iron-sulfur (Fe-S) centers, to quinones in the respiratory chain. The immediate electron acceptor for the enzyme in this species is believed to be ubiquinone. Couples the redox reaction to proton translocation (for every two electrons transferred, four hydrogen ions are translocated across the cytoplasmic membrane), and thus conserves the redox energy in a proton gradient. The polypeptide is NADH-quinone oxidoreductase subunit I (Bdellovibrio bacteriovorus (strain ATCC 15356 / DSM 50701 / NCIMB 9529 / HD100)).